The following is a 159-amino-acid chain: MSSLCPYTGRPTGLFRDFEDMMPYWAQRHSMLNNFNNIVPQQLNEVENTAQKFCVKLDVAAFKPEELKVNLEGHVLTIEGHHEVKTEHGFSKRSFTRQFTLPKDVDLAHIHTVINKEGQMTIDAPKTGSNTTVRALPIHTSAGHAVTQKPSSTTTTGKH.

The sHSP domain occupies 33-141 (NNFNNIVPQQ…TVRALPIHTS (109 aa)).

The protein belongs to the small heat shock protein (HSP20) family.

In Caenorhabditis elegans, this protein is Stress-induced protein 1.